Here is a 473-residue protein sequence, read N- to C-terminus: Photosystem II CP43 reaction center protein (473 aa).

Positions 1 to 14 (MKTLYSPRRYYPVE) are excised as a propeptide. Thr15 is subject to N-acetylthreonine. A Phosphothreonine modification is found at Thr15. The next 5 membrane-spanning stretches (helical) occupy residues 69-93 (LFEVAHFVPEKPMYEQGLILLPHLA), 134-155 (IIGPETLEESFPFFGYVWKDKN), 178-200 (KAVWFGGVYDTWAPGGGDVRVIT), 255-275 (KPFAWARRAFVWSGEAYLSYS), and 291-312 (WFNNTAYPSEFYGPTGPEASQA). Glu367 contacts [CaMn4O5] cluster. The chain crosses the membrane as a helical span at residues 447-471 (RARAAAAGFEKGIERETEPVLFMSP).

The protein belongs to the PsbB/PsbC family. PsbC subfamily. As to quaternary structure, PSII is composed of 1 copy each of membrane proteins PsbA, PsbB, PsbC, PsbD, PsbE, PsbF, PsbH, PsbI, PsbJ, PsbK, PsbL, PsbM, PsbT, PsbX, PsbY, PsbZ, Psb30/Ycf12, at least 3 peripheral proteins of the oxygen-evolving complex and a large number of cofactors. It forms dimeric complexes. Binds multiple chlorophylls and provides some of the ligands for the Ca-4Mn-5O cluster of the oxygen-evolving complex. It may also provide a ligand for a Cl- that is required for oxygen evolution. PSII binds additional chlorophylls, carotenoids and specific lipids. serves as cofactor.

The protein localises to the plastid. It is found in the chloroplast thylakoid membrane. Its function is as follows. One of the components of the core complex of photosystem II (PSII). It binds chlorophyll and helps catalyze the primary light-induced photochemical processes of PSII. PSII is a light-driven water:plastoquinone oxidoreductase, using light energy to abstract electrons from H(2)O, generating O(2) and a proton gradient subsequently used for ATP formation. In Chaetosphaeridium globosum (Charophycean green alga), this protein is Photosystem II CP43 reaction center protein.